The following is an 89-amino-acid chain: Small ribosomal subunit protein uS15 (89 aa).

The protein belongs to the universal ribosomal protein uS15 family. Part of the 30S ribosomal subunit. Forms a bridge to the 50S subunit in the 70S ribosome, contacting the 23S rRNA.

Functionally, one of the primary rRNA binding proteins, it binds directly to 16S rRNA where it helps nucleate assembly of the platform of the 30S subunit by binding and bridging several RNA helices of the 16S rRNA. Its function is as follows. Forms an intersubunit bridge (bridge B4) with the 23S rRNA of the 50S subunit in the ribosome. This is Small ribosomal subunit protein uS15 from Corynebacterium aurimucosum (strain ATCC 700975 / DSM 44827 / CIP 107346 / CN-1) (Corynebacterium nigricans).